The chain runs to 161 residues: Cyclic pyranopterin monophosphate synthase (161 aa).

Residues 73 to 75 and 110 to 111 each bind substrate; these read LCH and ME. Asp125 is an active-site residue.

It belongs to the MoaC family. In terms of assembly, homohexamer; trimer of dimers.

The catalysed reaction is (8S)-3',8-cyclo-7,8-dihydroguanosine 5'-triphosphate = cyclic pyranopterin phosphate + diphosphate. It functions in the pathway cofactor biosynthesis; molybdopterin biosynthesis. Functionally, catalyzes the conversion of (8S)-3',8-cyclo-7,8-dihydroguanosine 5'-triphosphate to cyclic pyranopterin monophosphate (cPMP). This Pseudomonas syringae pv. syringae (strain B728a) protein is Cyclic pyranopterin monophosphate synthase.